The chain runs to 87 residues: Protein anon-73B1 (87 aa).

A helical membrane pass occupies residues 25–47 (LLIRYGLYVGALFQFVCISAAVL). A disordered region spans residues 52–87 (PDVNSNPETGEVTEREGEPVRTRLHKIRKLEKKKRR). Residues 63–72 (VTEREGEPVR) are compositionally biased toward basic and acidic residues. Basic residues predominate over residues 73 to 87 (TRLHKIRKLEKKKRR).

It belongs to the UPF0239 family.

The protein resides in the membrane. In Drosophila erecta (Fruit fly), this protein is Protein anon-73B1.